Here is a 127-residue protein sequence, read N- to C-terminus: Ribonuclease P protein component (127 aa).

It belongs to the RnpA family. As to quaternary structure, consists of a catalytic RNA component (M1 or rnpB) and a protein subunit.

The catalysed reaction is Endonucleolytic cleavage of RNA, removing 5'-extranucleotides from tRNA precursor.. In terms of biological role, RNaseP catalyzes the removal of the 5'-leader sequence from pre-tRNA to produce the mature 5'-terminus. It can also cleave other RNA substrates such as 4.5S RNA. The protein component plays an auxiliary but essential role in vivo by binding to the 5'-leader sequence and broadening the substrate specificity of the ribozyme. The protein is Ribonuclease P protein component of Agrobacterium fabrum (strain C58 / ATCC 33970) (Agrobacterium tumefaciens (strain C58)).